The following is a 979-amino-acid chain: Collagen alpha-2(I) chain (979 aa).

Residues 1–979 form a disordered region; that stretch reads SGGFDFSFLP…FGYEGDFYRA (979 aa). Proline 10, proline 13, proline 38, and proline 44 each carry 4-hydroxyproline. A compositionally biased stretch (low complexity) spans 24 to 70; it reads LGPGPMGLMGPRGPPGASGAPGPQGFQGPAGEPGEPGQTGPAGARGP. 5-hydroxylysine; alternate is present on lysine 99. Lysine 99 carries an O-linked (Gal...) hydroxylysine; alternate glycan. 4 stretches are compositionally biased toward low complexity: residues 147–176, 222–263, 272–282, and 312–331; these read VGAP…SAGP, PGAN…AGSK, SAGPQGPPGSS, and RAGV…AGVR. Proline 334 and proline 337 each carry 4-hydroxyproline. The span at 363-382 shows a compositional bias: low complexity; sequence LPGIDGRPGPIGPAGARGEA. Residues 427–436 show a composition bias toward gly residues; that stretch reads GVQGGKGEQG. The span at 483–500 shows a compositional bias: low complexity; that stretch reads PGESGAVGPSGAIGSRGP. Positions 517–527 are enriched in gly residues; sequence GAPGGSGGLPG. Low complexity-rich tracts occupy residues 550 to 594 and 601 to 621; these read VGTT…PRGS and VGPA…QPGA. Residues 622–631 show a composition bias toward basic and acidic residues; that stretch reads KGERGTKGPK. Residues 639–649 are compositionally biased toward low complexity; that stretch reads PTGPVGSAGPA. Residues 659-668 show a composition bias toward gly residues; it reads GSRGDGGPPG. Low complexity predominate over residues 669–679; the sequence is ATGFPGAAGRT. Residues 710 to 724 are compositionally biased toward gly residues; it reads GPVGRGETGAGGPPG. Composition is skewed to low complexity over residues 725-759 and 767-777; these read FTGE…LGLP and LPGVAGAVGEP. A compositionally biased stretch (gly residues) spans 778–788; it reads GPLGIGPPGAR. The span at 840–855 shows a compositional bias: low complexity; the sequence is EPGPVGSVGPVGALGP. The span at 865–876 shows a compositional bias: basic and acidic residues; that stretch reads RGDKGEPGDKGP. The segment covering 949–961 has biased composition (pro residues); it reads SGPPGPPGPPGPP.

This sequence belongs to the fibrillar collagen family. In terms of assembly, trimers of one alpha 2(I) and two alpha 1(I) chains. Interacts (via C-terminus) with TMEM131 (via PapD-L domain); the interaction is direct and is involved in assembly and TRAPPIII ER-to-Golgi transport complex-dependent secretion of collagen. Prolines at the third position of the tripeptide repeating unit (G-X-Y) are hydroxylated in some or all of the chains. As to expression, expressed in bones.

The protein localises to the secreted. Its subcellular location is the extracellular space. It localises to the extracellular matrix. Its function is as follows. Type I collagen is a member of group I collagen (fibrillar forming collagen). This is Collagen alpha-2(I) chain from Bradypus variegatus (Brown-throated three-fingered sloth).